A 272-amino-acid chain; its full sequence is Ribosomal RNA small subunit methyltransferase A (272 aa).

S-adenosyl-L-methionine-binding residues include Asn18, Leu20, Gly45, Glu66, Asp91, and Asn113.

This sequence belongs to the class I-like SAM-binding methyltransferase superfamily. rRNA adenine N(6)-methyltransferase family. RsmA subfamily.

It is found in the cytoplasm. The catalysed reaction is adenosine(1518)/adenosine(1519) in 16S rRNA + 4 S-adenosyl-L-methionine = N(6)-dimethyladenosine(1518)/N(6)-dimethyladenosine(1519) in 16S rRNA + 4 S-adenosyl-L-homocysteine + 4 H(+). Its function is as follows. Specifically dimethylates two adjacent adenosines (A1518 and A1519) in the loop of a conserved hairpin near the 3'-end of 16S rRNA in the 30S particle. May play a critical role in biogenesis of 30S subunits. The polypeptide is Ribosomal RNA small subunit methyltransferase A (Serratia proteamaculans (strain 568)).